The chain runs to 190 residues: Xanthine phosphoribosyltransferase (190 aa).

The xanthine site is built by Leu20 and Asn27. 128–132 (ANGHA) is a 5-phospho-alpha-D-ribose 1-diphosphate binding site. Residue Lys156 participates in xanthine binding.

This sequence belongs to the purine/pyrimidine phosphoribosyltransferase family. Xpt subfamily. As to quaternary structure, homodimer.

It is found in the cytoplasm. The enzyme catalyses XMP + diphosphate = xanthine + 5-phospho-alpha-D-ribose 1-diphosphate. It participates in purine metabolism; XMP biosynthesis via salvage pathway; XMP from xanthine: step 1/1. Its function is as follows. Converts the preformed base xanthine, a product of nucleic acid breakdown, to xanthosine 5'-monophosphate (XMP), so it can be reused for RNA or DNA synthesis. This Ectopseudomonas mendocina (strain ymp) (Pseudomonas mendocina) protein is Xanthine phosphoribosyltransferase.